The chain runs to 231 residues: MNEVSTGASALRLEGLTRRFRSGEETLEILSGAEFELRAGEIVALVAPSGTGKSTLLHLAGLLEAPSAGTVFVADRPASGLSDTVRTAIRRDQIGFVYQFHHLLGEFTACENVMLPQLIAGVSPRKARERARDLLGRFGLSHRLDSLPGRLSGGEQQRTAIARALANQPKLLLADEPTGNLDIGTADHVFGELLRVVREEGAAALIATHNDELASRMDRTVTLRDGKLVPF.

Residues 11 to 231 (LRLEGLTRRF…TLRDGKLVPF (221 aa)) form the ABC transporter domain. Residue 47–54 (APSGTGKS) coordinates ATP.

This sequence belongs to the ABC transporter superfamily. Lipoprotein translocase (TC 3.A.1.125) family. The complex is composed of two ATP-binding proteins (LolD) and two transmembrane proteins (LolC and LolE).

The protein localises to the cell inner membrane. Functionally, part of the ABC transporter complex LolCDE involved in the translocation of mature outer membrane-directed lipoproteins, from the inner membrane to the periplasmic chaperone, LolA. Responsible for the formation of the LolA-lipoprotein complex in an ATP-dependent manner. The protein is Lipoprotein-releasing system ATP-binding protein LolD of Gluconobacter oxydans (strain 621H) (Gluconobacter suboxydans).